A 131-amino-acid chain; its full sequence is D-ribose pyranase (131 aa).

His-20 acts as the Proton donor in catalysis. Residues Asp-28, His-98, and 120 to 122 (FSN) each bind substrate.

Belongs to the RbsD / FucU family. RbsD subfamily. Homodecamer.

Its subcellular location is the cytoplasm. It carries out the reaction beta-D-ribopyranose = beta-D-ribofuranose. Its pathway is carbohydrate metabolism; D-ribose degradation; D-ribose 5-phosphate from beta-D-ribopyranose: step 1/2. Its function is as follows. Catalyzes the interconversion of beta-pyran and beta-furan forms of D-ribose. In Oenococcus oeni (strain ATCC BAA-331 / PSU-1), this protein is D-ribose pyranase.